A 503-amino-acid polypeptide reads, in one-letter code: MKLLDAIKTYADAKPQAEAFRSLDHSLTYGELWDLSERVASGIQKHTADGSKAPVLVYGHMEPNMIVSFLGSVKAGRPYIPVDVSIPAERIVKIIESSGAELLISVSGDAVDTGSNLIKTVTPEELAADGDADLSRENWVKELDTFYIIYTSGSTGNPKGVQISADNLQSFTDWICRDFPVGEGKTFLNQAPFSFDLSVMDIFPSLQTGGTLHCVTKDKINKPKVLFEELEKSKLNVWTSTPSFVQMCLMDPGFTQELLPEAEVFMFCGEALPAAVAQELLNRFPKARVFNTYGPTETTVAVTSVEITQQIIDENESLPVGFAKPDMDIFIMDENGNKLPDGEKGEIIIAGPSVSKGYLGEPSLTEKAFFPIDGQWAYHTGDAGYVQDGQIFCQGRLDFQIKLHGYRMELEEIEVHVRQSQYVRTAVVIPYQPNGPVEYLIAAIVPEKHDFEKEFQLTSAIKKELAASLPAYMIPRKFIYQDHIQMTANGKIDRKRIGEEVLV.

T151–S152 serves as a coordination point for ATP. D196 contributes to the D-alanine binding site. N291–T296 is an ATP binding site. A D-alanine-binding site is contributed by V300. Positions 382 and 491 each coordinate ATP. Position 491 (K491) interacts with D-alanine.

The protein belongs to the ATP-dependent AMP-binding enzyme family. DltA subfamily.

The protein resides in the cytoplasm. The enzyme catalyses holo-[D-alanyl-carrier protein] + D-alanine + ATP = D-alanyl-[D-alanyl-carrier protein] + AMP + diphosphate. It participates in cell wall biogenesis; lipoteichoic acid biosynthesis. Functionally, catalyzes the first step in the D-alanylation of lipoteichoic acid (LTA), the activation of D-alanine and its transfer onto the D-alanyl carrier protein (Dcp) DltC. In an ATP-dependent two-step reaction, forms a high energy D-alanyl-AMP intermediate, followed by transfer of the D-alanyl residue as a thiol ester to the phosphopantheinyl prosthetic group of the Dcp. D-alanylation of LTA plays an important role in modulating the properties of the cell wall in Gram-positive bacteria, influencing the net charge of the cell wall. This chain is D-alanine--D-alanyl carrier protein ligase, found in Bacillus velezensis (strain DSM 23117 / BGSC 10A6 / LMG 26770 / FZB42) (Bacillus amyloliquefaciens subsp. plantarum).